We begin with the raw amino-acid sequence, 445 residues long: MSNRKYFGTDGIRGRVGDAPITPEFVLKLGWAAGKVLARHGSRKIIIGKDTRISGYMLESALEAGLSAAGLSASFTGPMPTPAVAYLTRTFRAEAGIVISASHNPFYDNGIKFFSIDGTKLPDEVEEAIEAEMEKELTCVDSSELGKASRIVDAAGRYIEFCKGTFPNELSLSHLKIVVDCANGATYHIAPNVFRELGAKVIAIGCEPDGLNINEEVGATDVRALQARVLAEKADLGIAFDGDGDRVIMVDHEGNKVDGDQILYIIAREGLRQGQLRGGAVGTLMSNMGLELALKQLGIPFARAKVGDRYVLEKLQEKGWRIGAENSGHVILLDKTTTGDGIVASLQVVAAMVRNHMNLHDLCSGMKMFPQILVNVRFTAGKGDPLENENVKAVMAEVEAALGNRGRVLLRKSGTEPLIRVMVEGEEEAQVTEFAHRIADAVKAA.

Serine 102 acts as the Phosphoserine intermediate in catalysis. Residues serine 102, aspartate 241, aspartate 243, and aspartate 245 each contribute to the Mg(2+) site. Serine 102 is subject to Phosphoserine.

The protein belongs to the phosphohexose mutase family. Mg(2+) is required as a cofactor. Post-translationally, activated by phosphorylation.

The enzyme catalyses alpha-D-glucosamine 1-phosphate = D-glucosamine 6-phosphate. In terms of biological role, catalyzes the conversion of glucosamine-6-phosphate to glucosamine-1-phosphate. The chain is Phosphoglucosamine mutase from Enterobacter sp. (strain 638).